The primary structure comprises 137 residues: Large ribosomal subunit protein uL16 (137 aa).

The protein belongs to the universal ribosomal protein uL16 family. Part of the 50S ribosomal subunit.

In terms of biological role, binds 23S rRNA and is also seen to make contacts with the A and possibly P site tRNAs. The sequence is that of Large ribosomal subunit protein uL16 from Endomicrobium trichonymphae.